Consider the following 897-residue polypeptide: Mating-type protein ALPHA3 (897 aa).

In terms of biological role, mating type proteins are sequence specific DNA-binding proteins that act as master switches in yeast differentiation by controlling gene expression in a cell type-specific fashion. Required for efficient mating as an alpha-cell. The chain is Mating-type protein ALPHA3 (HMLALPHA3) from Kluyveromyces lactis (strain ATCC 8585 / CBS 2359 / DSM 70799 / NBRC 1267 / NRRL Y-1140 / WM37) (Yeast).